The primary structure comprises 621 residues: Rab11 family-interacting protein 4A (621 aa).

EF-hand domains are found at residues 14–49 (AFLK…FGQG) and 47–82 (GQGD…IKGC). Positions 27, 29, 31, 33, 38, 60, 62, 66, and 71 each coordinate Ca(2+). 2 disordered regions span residues 132–172 (YSDE…KEEG) and 203–243 (DYGE…GQTP). The span at 151–161 (AADSGAGSESS) shows a compositional bias: low complexity. Residues 162–172 (EGGRQDDKEEG) show a composition bias toward basic and acidic residues. Over residues 225–243 (TNGFSDLGSSLPSSAGQTP) the composition is skewed to polar residues. Positions 348–556 (DLKSKLKQEN…LNGQILSLSL (209 aa)) form a coiled coil. One can recognise an FIP-RBD domain in the interval 558-620 (EAKNLFACHT…DHNPSILEIK (63 aa)).

As to quaternary structure, homodimer. Forms a complex with Rab11 (rab11a or rab11b) and arf6. Isoform 1 is predominantly expressed in neural tissues. Isoform B is expressed ubiquitously. In the developing retina, it is expressed in progenitors throughout the retina at early stages and becomes restricted to the ganglion cell layer and ciliary marginal zone as differentiation proceeds.

Its subcellular location is the recycling endosome membrane. The protein localises to the cleavage furrow. It localises to the midbody. It is found in the cytoplasmic vesicle. Acts as a regulator of endocytic traffic by participating in membrane delivery. Required for the abscission step in cytokinesis, possibly by acting as an 'address tag' delivering recycling endosome membranes to the cleavage furrow during late cytokinesis. May play a role in differentiation during retinal development. The protein is Rab11 family-interacting protein 4A (rab11fip4a) of Danio rerio (Zebrafish).